The chain runs to 211 residues: Pyridoxine/pyridoxamine 5'-phosphate oxidase (211 aa).

Substrate-binding positions include 8 to 11 and Lys66; that span reads RRDY. Residues 61–66, 76–77, Arg82, Lys83, and Gln105 each bind FMN; these read RLVLLK and FT. The substrate site is built by Tyr123, Arg127, and Ser131. FMN-binding positions include 140–141 and Trp184; that span reads QS. Substrate is bound at residue 190-192; that stretch reads RLH. Arg194 lines the FMN pocket.

Belongs to the pyridoxamine 5'-phosphate oxidase family. Homodimer. FMN serves as cofactor.

It carries out the reaction pyridoxamine 5'-phosphate + O2 + H2O = pyridoxal 5'-phosphate + H2O2 + NH4(+). The enzyme catalyses pyridoxine 5'-phosphate + O2 = pyridoxal 5'-phosphate + H2O2. It participates in cofactor metabolism; pyridoxal 5'-phosphate salvage; pyridoxal 5'-phosphate from pyridoxamine 5'-phosphate: step 1/1. The protein operates within cofactor metabolism; pyridoxal 5'-phosphate salvage; pyridoxal 5'-phosphate from pyridoxine 5'-phosphate: step 1/1. Its function is as follows. Catalyzes the oxidation of either pyridoxine 5'-phosphate (PNP) or pyridoxamine 5'-phosphate (PMP) into pyridoxal 5'-phosphate (PLP). This Thermosynechococcus vestitus (strain NIES-2133 / IAM M-273 / BP-1) protein is Pyridoxine/pyridoxamine 5'-phosphate oxidase.